Consider the following 175-residue polypeptide: Coagulogen (175 aa).

Cystine bridges form between Cys8–Cys167, Cys10–Cys95, Cys60–Cys161, Cys65–Cys121, Cys75–Cys168, Cys88–Cys140, Cys127–Cys170, and Cys134–Cys172.

It belongs to the coagulin family. In terms of assembly, coagulogen is cleaved after Arg-18 and Arg-46 by a clotting enzyme contained in the hemocyte and activated by a bacterial endotoxin (lipopolysaccharide). This cleavage releases the peptide C and leaves 2 chains of coagulin, A and B, linked by two disulfide bonds. Coagulin molecules interlink to form a gel. As to expression, hemolymph.

Its subcellular location is the secreted. In terms of biological role, coagulogen is a gel-forming protein of hemolymph; it hinders the spread of invaders by immobilizing them. In Tachypleus gigas (Southeast Asian horseshoe crab), this protein is Coagulogen.